Here is a 226-residue protein sequence, read N- to C-terminus: Thymidylate kinase (226 aa).

Residue 20-27 coordinates ATP; sequence GGEGAGKS.

Belongs to the thymidylate kinase family.

The enzyme catalyses dTMP + ATP = dTDP + ADP. Functionally, phosphorylation of dTMP to form dTDP in both de novo and salvage pathways of dTTP synthesis. This chain is Thymidylate kinase, found in Bradyrhizobium sp. (strain ORS 278).